The chain runs to 295 residues: ATP synthase gamma chain (295 aa).

Belongs to the ATPase gamma chain family. As to quaternary structure, F-type ATPases have 2 components, CF(1) - the catalytic core - and CF(0) - the membrane proton channel. CF(1) has five subunits: alpha(3), beta(3), gamma(1), delta(1), epsilon(1). CF(0) has three main subunits: a, b and c.

Its subcellular location is the cell inner membrane. In terms of biological role, produces ATP from ADP in the presence of a proton gradient across the membrane. The gamma chain is believed to be important in regulating ATPase activity and the flow of protons through the CF(0) complex. The protein is ATP synthase gamma chain of Aliarcobacter butzleri (strain RM4018) (Arcobacter butzleri).